Reading from the N-terminus, the 333-residue chain is Ribosome biogenesis regulatory protein homolog (333 aa).

Disordered stretches follow at residues 227–248 (KANV…VSGE) and 271–333 (AAAV…ARKG). Residues 278 to 295 (LREKKEKSERKGAKDQTR) show a composition bias toward basic and acidic residues. A compositionally biased stretch (basic residues) spans 324-333 (GANKAKARKG).

It belongs to the RRS1 family.

The protein resides in the nucleus. It is found in the nucleolus. In terms of biological role, involved in ribosomal large subunit assembly. This Caenorhabditis elegans protein is Ribosome biogenesis regulatory protein homolog.